Here is a 128-residue protein sequence, read N- to C-terminus: Large ribosomal subunit protein bL17 (128 aa).

It belongs to the bacterial ribosomal protein bL17 family. Part of the 50S ribosomal subunit. Contacts protein L32.

The chain is Large ribosomal subunit protein bL17 from Histophilus somni (strain 129Pt) (Haemophilus somnus).